Reading from the N-terminus, the 1016-residue chain is Formate dehydrogenase-O major subunit (1016 aa).

Residues 1 to 33 (MQVSRRQFFKICAGGMAGTTAAALGFAPSVALA) constitute a signal peptide (tat-type signal). Residues 43–106 (TRETRNTCTY…GLVDFIHSES (64 aa)) form the 4Fe-4S Mo/W bis-MGD-type domain. Cys-50, Cys-53, Cys-57, and Cys-92 together coordinate [4Fe-4S] cluster. Position 196 (Sec-196) is a non-standard amino acid, selenocysteine.

This sequence belongs to the prokaryotic molybdopterin-containing oxidoreductase family. As to quaternary structure, formate dehydrogenase is a membrane-bound complex, formed by subunits alpha, beta and gamma. The cofactor is Mo-bis(molybdopterin guanine dinucleotide). It depends on [4Fe-4S] cluster as a cofactor. In terms of processing, exported by the Tat system. The position of the signal peptide cleavage has not been experimentally proven.

Its subcellular location is the periplasm. The catalysed reaction is formate + NAD(+) = CO2 + NADH. Functionally, allows to use formate as major electron donor during aerobic respiration. Subunit alpha possibly forms the active site. The chain is Formate dehydrogenase-O major subunit (fdoG) from Escherichia coli (strain K12).